We begin with the raw amino-acid sequence, 262 residues long: 5'-nucleotidase SurE (262 aa).

A divalent metal cation-binding residues include aspartate 8, aspartate 9, serine 39, and asparagine 91.

The protein belongs to the SurE nucleotidase family. A divalent metal cation is required as a cofactor.

Its subcellular location is the cytoplasm. The enzyme catalyses a ribonucleoside 5'-phosphate + H2O = a ribonucleoside + phosphate. In terms of biological role, nucleotidase that shows phosphatase activity on nucleoside 5'-monophosphates. This is 5'-nucleotidase SurE from Geobacter sulfurreducens (strain ATCC 51573 / DSM 12127 / PCA).